The primary structure comprises 383 residues: Chaperone protein DnaJ (383 aa).

The J domain maps to 5–69; the sequence is DYYDILGVSK…QKRAQYDQFG (65 aa). The CR-type zinc-finger motif lies at 138 to 222; that stretch reads GKTTTIKYDR…CHGAGHVHER (85 aa). Zn(2+) is bound by residues cysteine 151, cysteine 154, cysteine 168, cysteine 171, cysteine 194, cysteine 197, cysteine 210, and cysteine 213. CXXCXGXG motif repeat units follow at residues 151–158, 168–175, 194–201, and 210–217; these read CKTCHGTG, CPRCHGAG, CPECNGTG, and CDTCHGAG.

Belongs to the DnaJ family. In terms of assembly, homodimer. Requires Zn(2+) as cofactor.

It localises to the cytoplasm. Functionally, participates actively in the response to hyperosmotic and heat shock by preventing the aggregation of stress-denatured proteins and by disaggregating proteins, also in an autonomous, DnaK-independent fashion. Unfolded proteins bind initially to DnaJ; upon interaction with the DnaJ-bound protein, DnaK hydrolyzes its bound ATP, resulting in the formation of a stable complex. GrpE releases ADP from DnaK; ATP binding to DnaK triggers the release of the substrate protein, thus completing the reaction cycle. Several rounds of ATP-dependent interactions between DnaJ, DnaK and GrpE are required for fully efficient folding. Also involved, together with DnaK and GrpE, in the DNA replication of plasmids through activation of initiation proteins. This Limosilactobacillus reuteri (strain DSM 20016) (Lactobacillus reuteri) protein is Chaperone protein DnaJ.